The primary structure comprises 445 residues: Protein cereblon (445 aa).

Positions 1 to 50 (MAAEEGGDGRRNMGNPPPPAPAESEEEDDNEMEVEDQDGKEAEKPNMINF) are disordered. Residues 23–36 (ESEEEDDNEMEVED) show a composition bias toward acidic residues. The region spanning 82 to 321 (IPVLPHVMVM…CELDIMNKCT (240 aa)) is the Lon N-terminal domain. The 109-residue stretch at 320–428 (CTSLCCKQCQ…LTRSALLPRI (109 aa)) folds into the CULT domain. Zn(2+)-binding residues include C325 and C328. (S)-thalidomide is bound by residues H380, W382, and W388. Zn(2+) is bound by residues C393 and C396.

This sequence belongs to the CRBN family. Component of a DCX (DDB1-CUL4-X-box) protein ligase complex. Interacts directly with DDB1.

It is found in the cytoplasm. The protein resides in the nucleus. It functions in the pathway protein modification; protein ubiquitination. Functionally, substrate recognition component of a DCX (DDB1-CUL4-X-box) E3 protein ligase complex that mediates the ubiquitination and subsequent proteasomal degradation of target proteins, such as MEIS2. Normal degradation of key regulatory proteins is required for normal limb outgrowth and expression of the fibroblast growth factor FGF8. Maintains presynaptic glutamate release and consequently cognitive functions, such as memory and learning, by negatively regulating large-conductance calcium-activated potassium (BK) channels in excitatory neurons. Likely to function by regulating the assembly and neuronal surface expression of BK channels via its interaction with KCNT1. May also be involved in regulating anxiety-like behaviors via a BK channel-independent mechanism. The chain is Protein cereblon (CRBN) from Gallus gallus (Chicken).